A 493-amino-acid chain; its full sequence is Cytochrome P450 710A4 (493 aa).

A helical transmembrane segment spans residues 5–25; the sequence is VSLFASLTPYLVSALLLFLLL. Cys-435 contributes to the heme binding site.

This sequence belongs to the cytochrome P450 family. It depends on heme as a cofactor. In terms of tissue distribution, very weak expression in roots and root hairs. Not detected in the root tips.

The protein resides in the membrane. The enzyme catalyses 5-dehydroepisterol + NADPH + O2 + H(+) = ergosta-5,7,22,24(28)-tetraen-3beta-ol + NADP(+) + 2 H2O. The protein operates within steroid biosynthesis; sterol biosynthesis. Required to form the C-22 double bond in the sterol side chain. Possesses C-22 desaturase activity toward beta-sitosterol and produces stigmasterol. The chain is Cytochrome P450 710A4 from Arabidopsis thaliana (Mouse-ear cress).